A 71-amino-acid chain; its full sequence is Small ribosomal subunit protein bS21 (71 aa).

This sequence belongs to the bacterial ribosomal protein bS21 family.

The chain is Small ribosomal subunit protein bS21 from Baumannia cicadellinicola subsp. Homalodisca coagulata.